Here is a 625-residue protein sequence, read N- to C-terminus: Threonine--tRNA ligase (625 aa).

Residues 1–147 (MRMLLIHSDY…TIVPEEAKVE (147 aa)) form an editing domain region. The segment at 206 to 505 (PHVRLMLEHE…MQEGKKPMFP (300 aa)) is catalytic. Positions 298, 350, and 474 each coordinate Zn(2+).

The protein belongs to the class-II aminoacyl-tRNA synthetase family. Homodimer. The cofactor is Zn(2+).

Its subcellular location is the cytoplasm. It carries out the reaction tRNA(Thr) + L-threonine + ATP = L-threonyl-tRNA(Thr) + AMP + diphosphate + H(+). Functionally, catalyzes the attachment of threonine to tRNA(Thr) in a two-step reaction: L-threonine is first activated by ATP to form Thr-AMP and then transferred to the acceptor end of tRNA(Thr). Also edits incorrectly charged L-seryl-tRNA(Thr). In Pyrococcus furiosus (strain ATCC 43587 / DSM 3638 / JCM 8422 / Vc1), this protein is Threonine--tRNA ligase.